The primary structure comprises 538 residues: Syncytin-1 (538 aa).

An N-terminal signal peptide occupies residues 1-20 (MALPYHIFLFTVLLPSFTLT). At 31–443 (SSPYQEFLWR…NIGPWGLLSQ (413 aa)) the chain is on the extracellular side. N169 carries an N-linked (GlcNAc...) asparagine glycan. The short motif at 186 to 189 (CWMC) is the CXXC element. Disulfide bonds link C186/C189, C186/C405, and C397/C404. N-linked (GlcNAc...) asparagine glycosylation is found at N208, N214, N234, N242, and N281. The tract at residues 320-340 (ILPFVMGAGVLGALGTGIGSI) is fusion peptide. The immunosuppression stretch occupies residues 380 to 396 (LQNRRALDLLTAERGGT). The short motif at 397–405 (CLFLGEECC) is the CX6CC element. N-linked (GlcNAc...) asparagine glycosylation is present at N409. Residues 444-464 (WMPWILPFLGPLAAIILLLLF) form a helical membrane-spanning segment. Residues 465–484 (GPCIFNLLVNFVSSRIEAIK) are essential for the fusiogenic function. At 465 to 538 (GPCIFNLLVN…LLRPNSAGSS (74 aa)) the chain is on the cytoplasmic side. A disordered region spans residues 494–538 (KTKNYRRSLDWPASPRSDVNDIKGIPPEEISTAQPLLRPNSAGSS).

This sequence belongs to the gamma type-C retroviral envelope protein family. HERV class-I W env subfamily. In terms of assembly, the mature envelope protein (Env) consists of a trimer of SU-TM heterodimers attached probably by a labile interchain disulfide bond. Interacts with the C-type lectin CD209/DC-SIGN. Post-translationally, specific enzymatic cleavages in vivo yield mature proteins. Envelope glycoproteins are synthesized as an inactive precursor that is heavily N-glycosylated and processed likely by furin in the Golgi to yield the mature SU and TM proteins. The cleavage site between SU and TM requires the minimal sequence [KR]-X-[KR]-R. The CXXC motif is highly conserved across a broad range of retroviral envelope proteins. It is thought to participate in the formation of a labile disulfide bond possibly with the CX6CC motif present in the transmembrane protein.

It is found in the cell membrane. The protein localises to the virion. Functionally, this endogenous retroviral envelope protein has retained its original fusogenic properties and participates in trophoblast fusion and the formation of a syncytium during placenta morphogenesis. May recognize and induce fusion through binding of SLC1A4 and SLC1A5. Its function is as follows. Endogenous envelope proteins may have kept, lost or modified their original function during evolution. Retroviral envelope proteins mediate receptor recognition and membrane fusion during early infection. The surface protein (SU) mediates receptor recognition, while the transmembrane protein (TM) acts as a class I viral fusion protein. The protein may have at least 3 conformational states: pre-fusion native state, pre-hairpin intermediate state, and post-fusion hairpin state. During viral and target cell membrane fusion, the coiled coil regions (heptad repeats) assume a trimer-of-hairpins structure, positioning the fusion peptide in close proximity to the C-terminal region of the ectodomain. The formation of this structure appears to drive apposition and subsequent fusion of membranes. The protein is Syncytin-1 (ERVW-1) of Hylobates pileatus (Pileated gibbon).